Consider the following 252-residue polypeptide: 5'-nucleotidase SurE (252 aa).

The a divalent metal cation site is built by D8, D9, S39, and N95.

This sequence belongs to the SurE nucleotidase family. A divalent metal cation serves as cofactor.

Its subcellular location is the cytoplasm. It catalyses the reaction a ribonucleoside 5'-phosphate + H2O = a ribonucleoside + phosphate. Functionally, nucleotidase that shows phosphatase activity on nucleoside 5'-monophosphates. In Clostridium botulinum (strain ATCC 19397 / Type A), this protein is 5'-nucleotidase SurE.